Reading from the N-terminus, the 107-residue chain is UPF0145 protein MAB_3451c (107 aa).

The protein belongs to the UPF0145 family.

The polypeptide is UPF0145 protein MAB_3451c (Mycobacteroides abscessus (strain ATCC 19977 / DSM 44196 / CCUG 20993 / CIP 104536 / JCM 13569 / NCTC 13031 / TMC 1543 / L948) (Mycobacterium abscessus)).